The following is a 445-amino-acid chain: Sterile alpha motif domain-containing protein 7 (445 aa).

The segment at 98-172 is required for localization to nuclear polycomb bodies; it reads HAARAEMEMY…HLQGNPILLA (75 aa). The tract at residues 193-282 is disordered; it reads YQKPPESDTE…WDDGKGKPSE (90 aa). Residues 227–244 show a composition bias toward basic and acidic residues; that stretch reads IKDPDIEVDNQQKPRVAD. The SAM domain maps to 324–378; sequence WTVDDVYNFIRSLPGCSDYAQVFKDHAIDGETLPLLTEQHLRGTMGLKLGPALKI. Residues 425 to 445 form a disordered region; sequence SIPGPQDLLSPKRTEQDVMRN. Basic and acidic residues predominate over residues 434 to 445; the sequence is SPKRTEQDVMRN.

Monomer, homodimer and homooligomer. Component of a Polycomb group (PcG) multiprotein PRC1-like complex. Interacts with PHC2 and NR2E3. Interacts with RNF1 in a PHC2-dependent manner. Interacts with SAMD11. Expressed in the retina and the pineal gland. In the retina, it is predominantly expressed in the outer nuclear layer and developing rod photoreceptors.

The protein resides in the nucleus. Its subcellular location is the cytoplasm. Its function is as follows. Component of a Polycomb group (PcG) multiprotein PRC1-like complex, essential for establishing rod photoreceptor cell identity and function by silencing nonrod gene expression in developing rod photoreceptor cells. Via its association with the PRC1-like complex, promotes epigenetic repressive marks H3K27me3 and H2AK119ub marks in nonrod genes, silencing their transcription. Represses Crx-controlled photoreceptor-specific gene expression. In Mus musculus (Mouse), this protein is Sterile alpha motif domain-containing protein 7 (Samd7).